Reading from the N-terminus, the 294-residue chain is Pyridoxal 5'-phosphate synthase subunit PdxS (294 aa).

Asp24 is a binding site for D-ribose 5-phosphate. Lys81 functions as the Schiff-base intermediate with D-ribose 5-phosphate in the catalytic mechanism. Gly153 is a binding site for D-ribose 5-phosphate. Arg165 contributes to the D-glyceraldehyde 3-phosphate binding site. Residues Gly214 and 235 to 236 (GS) each bind D-ribose 5-phosphate.

This sequence belongs to the PdxS/SNZ family. In the presence of PdxT, forms a dodecamer of heterodimers.

The catalysed reaction is aldehydo-D-ribose 5-phosphate + D-glyceraldehyde 3-phosphate + L-glutamine = pyridoxal 5'-phosphate + L-glutamate + phosphate + 3 H2O + H(+). The protein operates within cofactor biosynthesis; pyridoxal 5'-phosphate biosynthesis. Catalyzes the formation of pyridoxal 5'-phosphate from ribose 5-phosphate (RBP), glyceraldehyde 3-phosphate (G3P) and ammonia. The ammonia is provided by the PdxT subunit. Can also use ribulose 5-phosphate and dihydroxyacetone phosphate as substrates, resulting from enzyme-catalyzed isomerization of RBP and G3P, respectively. The protein is Pyridoxal 5'-phosphate synthase subunit PdxS of Bacillus pumilus (strain SAFR-032).